The sequence spans 627 residues: Sphingomyelin phosphodiesterase (627 aa).

The first 44 residues, 1–44 (MPHHRASSGQDHLRAGWEQRLERSLPAPRVGLLWMGLGLALVLA), serve as a signal peptide directing secretion. Residues 83–167 (QNLTCPACKV…LLGSSCGHWD (85 aa)) enclose the Saposin B-type domain. N-linked (GlcNAc...) asparagine glycosylation is present at N84. 3 cysteine pairs are disulfide-bonded: C87-C163, C90-C155, and C118-C129. N173 carries an N-linked (GlcNAc...) asparagine glycan. The Zn(2+) site is built by D204 and H206. 2 disulfide bridges follow: C219–C224 and C225–C248. 2 residues coordinate Zn(2+): D276 and N316. N-linked (GlcNAc...) asparagine glycans are attached at residues N333 and N393. C383 and C429 are oxidised to a cystine. Positions 423, 455, and 457 each coordinate Zn(2+). S506 carries the phosphoserine modification. The N-linked (GlcNAc...) asparagine glycan is linked to N518. 2 cysteine pairs are disulfide-bonded: C582-C586 and C592-C605. N611 carries N-linked (GlcNAc...) asparagine glycosylation.

The protein belongs to the acid sphingomyelinase family. As to quaternary structure, monomer. Interacts with SORT1; the interaction is required for SMPD1 targeting to lysosomes. The cofactor is Zn(2+). Post-translationally, proteolytically processed. Mature lysosomal form arises from C-terminal proteolytic processing of pro-sphingomyelin phosphodiesterase. In terms of processing, both lysosomal and secreted forms are glycosylated but they show a differential pattern of glycosylation. Phosphorylated at Ser-506 by PRKCD upon stress stimuli. Phosphorylation is required for secretion. Post-translationally, this form is generated following cleavage by CASP7 in the extracellular milieu. It shows increased activity.

The protein localises to the lysosome. It is found in the lipid droplet. The protein resides in the secreted. It localises to the extracellular space. The catalysed reaction is a sphingomyelin + H2O = phosphocholine + an N-acylsphing-4-enine + H(+). The enzyme catalyses N-(octadecanoyl)-sphing-4-enine-1-phosphocholine + H2O = N-octadecanoylsphing-4-enine + phosphocholine + H(+). It carries out the reaction a 1,2-diacyl-sn-glycero-3-phosphocholine + H2O = phosphocholine + a 1,2-diacyl-sn-glycerol + H(+). It catalyses the reaction 1,2-dihexadecanoyl-sn-glycero-3-phosphocholine + H2O = 1,2-dihexadecanoyl-sn-glycerol + phosphocholine + H(+). Hydrolysis of liposomal sphingomyelin is stimulated by incorporation of diacylglycerol (DAG), ceramide and free fatty acids into the liposomal membranes. Phosphatidylcholine hydrolysis is inhibited by incorporation of cholesterol, ceramide, DAG, monoacylglycerol and fatty acids. Converts sphingomyelin to ceramide. Exists as two enzymatic forms that arise from alternative trafficking of a single protein precursor, one that is targeted to the endolysosomal compartment, whereas the other is released extracellularly. However, in response to various forms of stress, lysosomal exocytosis may represent a major source of the secretory form. In terms of biological role, in the lysosomes, converts sphingomyelin to ceramide. Plays an important role in the export of cholesterol from the intraendolysosomal membranes. Also has phospholipase C activities toward 1,2-diacylglycerolphosphocholine and 1,2-diacylglycerolphosphoglycerol. Modulates stress-induced apoptosis through the production of ceramide. Functionally, when secreted, modulates cell signaling with its ability to reorganize the plasma membrane by converting sphingomyelin to ceramide. Secreted form is increased in response to stress and inflammatory mediators such as IL1B, IFNG or TNF as well as upon infection with bacteria and viruses. Produces the release of ceramide in the outer leaflet of the plasma membrane playing a central role in host defense. Ceramide reorganizes these rafts into larger signaling platforms that are required to internalize P.aeruginosa, induce apoptosis and regulate the cytokine response in infected cells. In wounded cells, the lysosomal form is released extracellularly in the presence of Ca(2+) and promotes endocytosis and plasma membrane repair. Its function is as follows. This form is generated following cleavage by CASP7 in the extracellular milieu in response to bacterial infection. It shows increased ability to convert sphingomyelin to ceramide and promotes plasma membrane repair. Plasma membrane repair by ceramide counteracts the action of gasdermin-D (GSDMD) perforin (PRF1) pores that are formed in response to bacterial infection. (Microbial infection) Secretion is activated by bacteria such as P.aeruginosa, this activation results in the release of ceramide in the outer leaflet of the plasma membrane which facilitates the infection. This Mus musculus (Mouse) protein is Sphingomyelin phosphodiesterase.